The primary structure comprises 235 residues: Aspartate/glutamate leucyltransferase (235 aa).

Belongs to the R-transferase family. Bpt subfamily.

The protein resides in the cytoplasm. It catalyses the reaction N-terminal L-glutamyl-[protein] + L-leucyl-tRNA(Leu) = N-terminal L-leucyl-L-glutamyl-[protein] + tRNA(Leu) + H(+). The enzyme catalyses N-terminal L-aspartyl-[protein] + L-leucyl-tRNA(Leu) = N-terminal L-leucyl-L-aspartyl-[protein] + tRNA(Leu) + H(+). Functionally, functions in the N-end rule pathway of protein degradation where it conjugates Leu from its aminoacyl-tRNA to the N-termini of proteins containing an N-terminal aspartate or glutamate. This chain is Aspartate/glutamate leucyltransferase, found in Pseudomonas syringae pv. syringae (strain B728a).